Here is a 273-residue protein sequence, read N- to C-terminus: Glutamate 5-kinase (273 aa).

Lysine 15 is an ATP binding site. Residues serine 55, aspartate 142, and asparagine 158 each coordinate substrate. ATP-binding positions include 178 to 179 (SD) and 220 to 226 (TGGMLSK).

This sequence belongs to the glutamate 5-kinase family.

The protein resides in the cytoplasm. It carries out the reaction L-glutamate + ATP = L-glutamyl 5-phosphate + ADP. It functions in the pathway amino-acid biosynthesis; L-proline biosynthesis; L-glutamate 5-semialdehyde from L-glutamate: step 1/2. Catalyzes the transfer of a phosphate group to glutamate to form L-glutamate 5-phosphate. In Streptococcus pyogenes serotype M2 (strain MGAS10270), this protein is Glutamate 5-kinase.